The following is a 197-amino-acid chain: Syndecan-4 (197 aa).

The signal sequence occupies residues 1–19 (MPLPRAAFLLGLLLAAAAA). The Extracellular segment spans residues 20-147 (ESVRETETMD…SIFERTEVLT (128 aa)). S38, S65, and S67 each carry an O-linked (Xyl...) (glycosaminoglycan) serine glycan. N-linked (GlcNAc...) asparagine glycosylation is found at N124 and N136. A helical membrane pass occupies residues 148 to 168 (ALIAGGAVGLLFAVFLILLLV). Residues 169–197 (YRMKKKDEGSYDLGKKPIYKKAPTNEFYA) are Cytoplasmic-facing.

The protein belongs to the syndecan proteoglycan family. In terms of assembly, interacts with SDOS. Post-translationally, O-glycosylated; contains both chondroitin sulfate and heparan sulfate. Ser-38, Ser-65 and Ser-67 can all be modified by either chondroitin sulfate or heparan sulfate, and the protein exists in forms that contain only chondroitin sulfate, only heparan sulfate and both chondroitin sulfate and heparan sulfate.

Its subcellular location is the membrane. Cell surface proteoglycan which regulates exosome biogenesis in concert with SDCBP and PDCD6IP. This is Syndecan-4 (SDC4) from Gallus gallus (Chicken).